We begin with the raw amino-acid sequence, 626 residues long: Putative L-type lectin-domain containing receptor kinase V.8 (626 aa).

A signal peptide spans 1-21 (MPSELKVLHIVLVLLYTLSSS). The interval 22–212 (TYNSNGNWTL…SIGAFHYMLS (191 aa)) is legume-lectin like. The Extracellular segment spans residues 22 to 245 (TYNSNGNWTL…PKKSSDRTKK (224 aa)). N-linked (GlcNAc...) asparagine glycans are attached at residues Asn28, Asn59, Asn112, and Asn162. A helical membrane pass occupies residues 246–266 (ILAVCLTLAVFAVFVASGICF). Residues 267–626 (VFYTRHKKVK…LTNSFLSHGR (360 aa)) are Cytoplasmic-facing. One can recognise a Protein kinase domain in the interval 303–562 (FKEKQLLGKG…GLLCAHHTEL (260 aa)). Residues 309 to 317 (LGKGGFGQV) and Lys332 each bind ATP. The Proton acceptor role is filled by Asp429.

It in the C-terminal section; belongs to the protein kinase superfamily. Ser/Thr protein kinase family. In the N-terminal section; belongs to the leguminous lectin family.

It localises to the cell membrane. The catalysed reaction is L-seryl-[protein] + ATP = O-phospho-L-seryl-[protein] + ADP + H(+). It catalyses the reaction L-threonyl-[protein] + ATP = O-phospho-L-threonyl-[protein] + ADP + H(+). The sequence is that of Putative L-type lectin-domain containing receptor kinase V.8 (LECRK58) from Arabidopsis thaliana (Mouse-ear cress).